Consider the following 260-residue polypeptide: Triosephosphate isomerase (260 aa).

11-13 contacts substrate; it reads NWK. His-103 (electrophile) is an active-site residue. Glu-175 acts as the Proton acceptor in catalysis. Substrate-binding positions include Gly-181, Ser-220, and 241 to 242; that span reads GG.

It belongs to the triosephosphate isomerase family. As to quaternary structure, homodimer.

It is found in the cytoplasm. The enzyme catalyses D-glyceraldehyde 3-phosphate = dihydroxyacetone phosphate. The protein operates within carbohydrate biosynthesis; gluconeogenesis. Its pathway is carbohydrate degradation; glycolysis; D-glyceraldehyde 3-phosphate from glycerone phosphate: step 1/1. In terms of biological role, involved in the gluconeogenesis. Catalyzes stereospecifically the conversion of dihydroxyacetone phosphate (DHAP) to D-glyceraldehyde-3-phosphate (G3P). This is Triosephosphate isomerase from Shewanella sp. (strain W3-18-1).